The following is a 244-amino-acid chain: Vesicle-associated membrane protein-associated protein SCS2 (244 aa).

An N-acetylserine modification is found at S2. Topologically, residues 2–222 are cytoplasmic; it reads SAVEISPDVL…EAATVPAENE (221 aa). The 124-residue stretch at 3–126 folds into the MSP domain; the sequence is AVEISPDVLV…ISKKIKVKYL (124 aa). S106 bears the Phosphoserine mark. The segment at 135-219 is disordered; that stretch reads QNQNIQENKE…QIKEAATVPA (85 aa). Residues 153-168 show a composition bias toward basic and acidic residues; that stretch reads SEPKEVPAVVNEKEVP. Residues 199–211 are compositionally biased toward polar residues; the sequence is QTSNSTPAPQNQI. The chain crosses the membrane as a helical; Anchor for type IV membrane protein span at residues 223–243; the sequence is SSSMGIFILVALLILVLGWFY. A topological domain (lumenal) is located at residue R244.

This sequence belongs to the VAMP-associated protein (VAP) (TC 9.B.17) family. As to quaternary structure, interacts with OPI1. Also interacts with PBI1. Interacts with EPO1.

The protein localises to the endoplasmic reticulum membrane. It localises to the nucleus membrane. Functionally, acts as an endoplasmic reticulum (ER) membrane anchor for cytoplasmic proteins via binding to the FFAT motif of targeted proteins. Regulates phospholipid biosynthesis by modulating the subcellular localization of the transcriptional repressor OPI1. Also contributes to the tethering of the ER to the plasma membrane. Allows interorganelle phosphatidylserine (PtdSer) transport via a process that involves the acceptor membrane complex PDR17-PDS2 that binds to PBI1 which in turn ligates to SCS2 and phosphatidic acid present in the donor membrane, forming a zone of apposition that facilitates PtdSer transfer. The sequence is that of Vesicle-associated membrane protein-associated protein SCS2 from Saccharomyces cerevisiae (strain ATCC 204508 / S288c) (Baker's yeast).